The chain runs to 234 residues: Endo-1,4-beta-xylanase 1 (234 aa).

A signal peptide spans 1-21 (MVSFIFTRIILFAAAINGAVA). N-linked (GlcNAc...) asparagine glycans are attached at residues Asn-25 and Asn-75. Residues 38 to 234 (SGTPSSTGYS…SSGFSSITVA (197 aa)) enclose the GH11 domain. Glu-124 serves as the catalytic Nucleophile. Asn-167 carries N-linked (GlcNAc...) asparagine glycosylation. The Proton donor role is filled by Glu-221.

Belongs to the glycosyl hydrolase 11 (cellulase G) family.

The protein resides in the secreted. It catalyses the reaction Endohydrolysis of (1-&gt;4)-beta-D-xylosidic linkages in xylans.. Its pathway is glycan degradation; xylan degradation. Its function is as follows. Endo-1,4-beta-xylanase involved in the hydrolysis of xylan, a major structural heterogeneous polysaccharide found in plant biomass representing the second most abundant polysaccharide in the biosphere, after cellulose. In Leucoagaricus gongylophorus (Leaf-cutting ant fungus), this protein is Endo-1,4-beta-xylanase 1 (Xyn1).